A 350-amino-acid chain; its full sequence is Bifunctional UDP-glucose 4-epimerase and UDP-xylose 4-epimerase 1 (350 aa).

Residues 15–17 (GFI), 36–40 (DNFDN), 67–68 (DL), phenylalanine 89, and lysine 93 each bind NAD(+). Serine 133 contributes to the substrate binding site. Catalysis depends on tyrosine 157, which acts as the Proton acceptor. Residues lysine 161 and tyrosine 185 each coordinate NAD(+).

Belongs to the NAD(P)-dependent epimerase/dehydratase family. NAD(+) serves as cofactor.

The enzyme catalyses UDP-alpha-D-glucose = UDP-alpha-D-galactose. It carries out the reaction UDP-beta-L-arabinopyranose = UDP-alpha-D-xylose. It functions in the pathway carbohydrate metabolism; galactose metabolism. It participates in nucleotide-sugar biosynthesis; UDP-L-arabinose biosynthesis; UDP-L-arabinose from UDP-alpha-D-xylose: step 1/1. Its pathway is cell wall biogenesis; cell wall polysaccharide biosynthesis. With respect to regulation, inhibited by Hg(2+). Functionally, catalyzes the interconversion between UDP-glucose and UDP-galactose and the interconversion between UDP-arabinose and UDP-xylose. This is Bifunctional UDP-glucose 4-epimerase and UDP-xylose 4-epimerase 1 from Pisum sativum (Garden pea).